The primary structure comprises 591 residues: Cytidine monophosphate-N-acetylneuraminic acid hydroxylase (591 aa).

In terms of domain architecture, Rieske spans 16–114 (LASAEVESLK…IENDDENGVS (99 aa)). Residues Cys-56, His-58, Cys-77, and His-80 each coordinate [2Fe-2S] cluster.

The protein belongs to the CMP-Neu5Ac hydroxylase family. Requires [2Fe-2S] cluster as cofactor.

Its subcellular location is the cytoplasm. It catalyses the reaction CMP-N-acetyl-beta-neuraminate + 2 Fe(II)-[cytochrome b5] + O2 + 2 H(+) = CMP-N-glycoloyl-beta-neuraminate + 2 Fe(III)-[cytochrome b5] + H2O. Its pathway is amino-sugar metabolism; N-acetylneuraminate metabolism. In terms of biological role, sialic acids are components of carbohydrate chains of glycoconjugates and are involved in cell-cell recognition and cell-pathogen interactions. Catalyzes the conversion of CMP-N-acetylneuraminic acid (CMP-Neu5Ac) into its hydroxylated derivative CMP-N-glycolylneuraminic acid (CMP-Neu5Gc), a sialic acid abundantly expressed at the surface of many cells. This Xenopus laevis (African clawed frog) protein is Cytidine monophosphate-N-acetylneuraminic acid hydroxylase (cmah).